The primary structure comprises 350 residues: MLSSQHRLVTQPAIRAYEAFSAPGFGFNSKLLDDAFGGSGLKRGYISEVCGAPGMGKTSLALQITANALLSGSRVIWVETCQPIPMERLRQLLDNHVPSSQDEEEKCDTDELLNLLDVVYAPNLVNILAFLRNFDQEKHLKEIGLLIIDNLSMPIQLAYPTSPEDYAYLRLRRNTSKKSSLSDSSQKENTLTLNKENEFSSKDDSNFAFHNSSTKTTINRRKKAIGTISSLLSKITSSCYVAIFVTTQMTSKVVSGIGAKLIPLLSTNWLDNLSYRLILYSRHSTEESKDGQSRPSHQLLRYAFMAKQPPAHSAESELAFQLTSTGIQDYQSIPTNSSQRRKRSILECES.

G51–T58 lines the ATP pocket. Residues Q331–S350 form a disordered region.

The protein belongs to the RecA family. RAD55 subfamily.

The protein resides in the nucleus. Its function is as follows. Required for radiation resistance and meiotic viability and acts in recombination and recombinational DNA repair pathways. This Schizosaccharomyces pombe (strain 972 / ATCC 24843) (Fission yeast) protein is DNA repair protein rhp55 (rhp55).